Consider the following 209-residue polypeptide: Ion-translocating oxidoreductase complex subunit G (209 aa).

The chain crosses the membrane as a helical span at residues 9-29 (GLVLAIFACASTGLVAVTHYL). Thr-175 is subject to FMN phosphoryl threonine.

This sequence belongs to the RnfG family. The complex is composed of six subunits: RnfA, RnfB, RnfC, RnfD, RnfE and RnfG. FMN serves as cofactor.

Its subcellular location is the cell inner membrane. Functionally, part of a membrane-bound complex that couples electron transfer with translocation of ions across the membrane. The sequence is that of Ion-translocating oxidoreductase complex subunit G from Vibrio atlanticus (strain LGP32) (Vibrio splendidus (strain Mel32)).